A 206-amino-acid chain; its full sequence is 2,3-bisphosphoglycerate-dependent phosphoglycerate mutase (206 aa).

Substrate-binding positions include 9–16 (RHGQSEWN), 22–23 (TG), Arg-61, 88–91 (ERDY), Lys-99, 115–116 (RR), and 159–160 (GN). His-10 serves as the catalytic Tele-phosphohistidine intermediate. The active-site Proton donor/acceptor is Glu-88.

The protein belongs to the phosphoglycerate mutase family. BPG-dependent PGAM subfamily. Homodimer.

It catalyses the reaction (2R)-2-phosphoglycerate = (2R)-3-phosphoglycerate. It functions in the pathway carbohydrate degradation; glycolysis; pyruvate from D-glyceraldehyde 3-phosphate: step 3/5. Its function is as follows. Catalyzes the interconversion of 2-phosphoglycerate and 3-phosphoglycerate. The chain is 2,3-bisphosphoglycerate-dependent phosphoglycerate mutase from Methylocella silvestris (strain DSM 15510 / CIP 108128 / LMG 27833 / NCIMB 13906 / BL2).